We begin with the raw amino-acid sequence, 66 residues long: Alpha-like toxin BmK-M7 (66 aa).

The region spanning 2-64 (RDGYIALPHN…VPIRVPGRCH (63 aa)) is the LCN-type CS-alpha/beta domain. Disulfide bonds link C12-C63, C16-C36, C22-C46, and C26-C48.

It belongs to the long (4 C-C) scorpion toxin superfamily. Sodium channel inhibitor family. Alpha subfamily. As to expression, expressed by the venom gland.

It localises to the secreted. Its function is as follows. Alpha toxins bind voltage-independently at site-3 of sodium channels (Nav) and inhibit the inactivation of the activated channels, thereby blocking neuronal transmission. This toxin is active on both mammals and insects. It can be considered as a cardiotoxin, as it can bind to human cardiac sodium channel and modify its normal properties. The chain is Alpha-like toxin BmK-M7 from Olivierus martensii (Manchurian scorpion).